Here is a 201-residue protein sequence, read N- to C-terminus: Small ribosomal subunit protein uS4 (201 aa).

Residues 91–154 (TRLDNVVYRA…RKMEWFEEAQ (64 aa)) enclose the S4 RNA-binding domain.

Belongs to the universal ribosomal protein uS4 family. Part of the 30S ribosomal subunit. Contacts protein S5. The interaction surface between S4 and S5 is involved in control of translational fidelity.

In terms of biological role, one of the primary rRNA binding proteins, it binds directly to 16S rRNA where it nucleates assembly of the body of the 30S subunit. Its function is as follows. With S5 and S12 plays an important role in translational accuracy. The sequence is that of Small ribosomal subunit protein uS4 from Corynebacterium ammoniagenes (Brevibacterium ammoniagenes).